The sequence spans 338 residues: Protein FosB (338 aa).

Disordered stretches follow at residues 1–54 (MFQA…PGSF) and 80–179 (AQSQ…RREL). Residues 13–31 (SRCSSSPSAESQYLSSVDS) are compositionally biased toward polar residues. Residue S27 is modified to Phosphoserine. Over residues 123-137 (PSTSTSTSGPVSARP) the composition is skewed to low complexity. The 64-residue stretch at 155–218 (EEKRRVRRER…ERLEFVLVAH (64 aa)) folds into the bZIP domain. Residues 157 to 182 (KRRVRRERNKLAAAKCRNRRRELTDR) are basic motif. The segment at 183 to 211 (LQAETDQLEEEKAELESEIAELQKEKERL) is leucine-zipper. Disordered regions lie at residues 222-276 (CKIP…PPNL) and 315-338 (AGSQRTSGSEQPSDPLNSPSLLAL). Positions 256–265 (LPPPPPPPLP) are enriched in pro residues. The span at 266–276 (FQSSRDAPPNL) shows a compositional bias: polar residues.

It belongs to the bZIP family. Fos subfamily. As to quaternary structure, heterodimer; binds to DNA as heterodimer. Component of an AP-1 transcription factor complex; composed of FOS-JUN heterodimers. As part of the AP-1 transcription factor complex, forms heterodimers with JUN, JUNB or JUND, thereby binding to the AP-1 consensus sequence and stimulating transcription. Phosphorylated; phosphorylation is induced by chronic electroconvulsive seizure (ECS) treatment. As to expression, expressed in brain. Expressed in pyramidal cells in CA1 and CA3, in the dentate gyrus and the nucleus accumbens (at protein level).

It localises to the nucleus. In terms of biological role, heterodimerizes with proteins of the JUN family to form an AP-1 transcription factor complex, thereby enhancing their DNA binding activity to an AP-1 consensus sequence 5'-TGA[GC]TCA-3' and enhancing their transcriptional activity. Exhibits transactivation activity in vitro. As part of the AP-1 complex, facilitates enhancer selection together with cell-type-specific transcription factors by collaboratively binding to nucleosomal enhancers and recruiting the SWI/SNF (BAF) chromatin remodeling complex to establish accessible chromatin. Together with JUN, plays a role in activation-induced cell death of T cells by binding to the AP-1 promoter site of FASLG/CD95L, and inducing its transcription in response to activation of the TCR/CD3 signaling pathway. Involved in the display of nurturing behavior towards newborns. May play a role in neurogenesis in the hippocampus and in learning and memory-related tasks by regulating the expression of various genes involved in neurogenesis, depression and epilepsy. Implicated in behavioral responses related to morphine reward and spatial memory. This is Protein FosB from Rattus norvegicus (Rat).